The chain runs to 275 residues: Dermonecrotic toxin LruSicTox-alphaIV1 (275 aa).

The active site involves histidine 5. The Mg(2+) site is built by glutamate 25 and aspartate 27. Histidine 41 acts as the Nucleophile in catalysis. Intrachain disulfides connect cysteine 45/cysteine 51 and cysteine 47/cysteine 192. A Mg(2+)-binding site is contributed by aspartate 85.

Belongs to the arthropod phospholipase D family. Class II subfamily. It depends on Mg(2+) as a cofactor. As to expression, expressed by the venom gland.

It is found in the secreted. The catalysed reaction is an N-(acyl)-sphingosylphosphocholine = an N-(acyl)-sphingosyl-1,3-cyclic phosphate + choline. It catalyses the reaction an N-(acyl)-sphingosylphosphoethanolamine = an N-(acyl)-sphingosyl-1,3-cyclic phosphate + ethanolamine. It carries out the reaction a 1-acyl-sn-glycero-3-phosphocholine = a 1-acyl-sn-glycero-2,3-cyclic phosphate + choline. The enzyme catalyses a 1-acyl-sn-glycero-3-phosphoethanolamine = a 1-acyl-sn-glycero-2,3-cyclic phosphate + ethanolamine. In terms of biological role, dermonecrotic toxins cleave the phosphodiester linkage between the phosphate and headgroup of certain phospholipids (sphingolipid and lysolipid substrates), forming an alcohol (often choline) and a cyclic phosphate. This toxin acts on sphingomyelin (SM). It may also act on ceramide phosphoethanolamine (CPE), lysophosphatidylcholine (LPC) and lysophosphatidylethanolamine (LPE), but not on lysophosphatidylserine (LPS), and lysophosphatidylglycerol (LPG). It acts by transphosphatidylation, releasing exclusively cyclic phosphate products as second products. Induces dermonecrosis, hemolysis, increased vascular permeability, edema, inflammatory response, and platelet aggregation. The polypeptide is Dermonecrotic toxin LruSicTox-alphaIV1 (Loxosceles rufescens (Mediterranean recluse spider)).